We begin with the raw amino-acid sequence, 352 residues long: Anthranilate phosphoribosyltransferase (352 aa).

Residues G83, 86-87, T91, 93-96, 111-119, and A123 each bind 5-phospho-alpha-D-ribose 1-diphosphate; these read GD, NIST, and KHGGRSVSS. Residue G83 coordinates anthranilate. S95 contributes to the Mg(2+) binding site. R169 is an anthranilate binding site. 2 residues coordinate Mg(2+): D228 and E229.

The protein belongs to the anthranilate phosphoribosyltransferase family. As to quaternary structure, homodimer. It depends on Mg(2+) as a cofactor.

The catalysed reaction is N-(5-phospho-beta-D-ribosyl)anthranilate + diphosphate = 5-phospho-alpha-D-ribose 1-diphosphate + anthranilate. Its pathway is amino-acid biosynthesis; L-tryptophan biosynthesis; L-tryptophan from chorismate: step 2/5. Catalyzes the transfer of the phosphoribosyl group of 5-phosphorylribose-1-pyrophosphate (PRPP) to anthranilate to yield N-(5'-phosphoribosyl)-anthranilate (PRA). The sequence is that of Anthranilate phosphoribosyltransferase from Neisseria meningitidis serogroup A / serotype 4A (strain DSM 15465 / Z2491).